A 629-amino-acid chain; its full sequence is Probable alpha-L-arabinofuranosidase A (629 aa).

The N-terminal stretch at 1-25 (MVALSTLSGLSALPFLFSLVQNVYG) is a signal peptide. Residues Asn-36, Asn-51, Asn-140, Asn-152, Asn-168, Asn-171, Asn-260, Asn-494, and Asn-534 are each glycosylated (N-linked (GlcNAc...) asparagine).

This sequence belongs to the glycosyl hydrolase 51 family.

Its subcellular location is the secreted. The enzyme catalyses Hydrolysis of terminal non-reducing alpha-L-arabinofuranoside residues in alpha-L-arabinosides.. It participates in glycan metabolism; L-arabinan degradation. Its function is as follows. Alpha-L-arabinofuranosidase involved in the degradation of arabinoxylan, a major component of plant hemicellulose. Acts only on small linear 1,5-alpha-linked L-arabinofuranosyl oligosaccharides. In Aspergillus flavus (strain ATCC 200026 / FGSC A1120 / IAM 13836 / NRRL 3357 / JCM 12722 / SRRC 167), this protein is Probable alpha-L-arabinofuranosidase A (abfA).